A 219-amino-acid polypeptide reads, in one-letter code: MNKEKAIVVFSGGQDSTTCLFWAKKKYEEVIAVSFDYNQKHKLELDCAKDICKKYNVEHHILDLNLLNQLAPNSLTRQDITVDKSAPKEGVPNSFVDGRNLLFLSFVAVFAKQKGVNTIITGVSQSDFSGYPDCRAVFIKSLNVTLDLAMDYEFEIITPLMWINKAETWKMAYDLGVLDIVKEETLTCYNGIKADGCGECPACKLRKKGYLEFEKQFMC.

10–20 (FSGGQDSTTCL) serves as a coordination point for ATP. Cys188, Cys197, Cys200, and Cys203 together coordinate Zn(2+).

This sequence belongs to the QueC family. As to quaternary structure, homodimer. Zn(2+) is required as a cofactor.

The catalysed reaction is 7-carboxy-7-deazaguanine + NH4(+) + ATP = 7-cyano-7-deazaguanine + ADP + phosphate + H2O + H(+). It functions in the pathway purine metabolism; 7-cyano-7-deazaguanine biosynthesis. In terms of biological role, catalyzes the ATP-dependent conversion of 7-carboxy-7-deazaguanine (CDG) to 7-cyano-7-deazaguanine (preQ(0)). The sequence is that of 7-cyano-7-deazaguanine synthase from Clostridium botulinum (strain Loch Maree / Type A3).